The following is a 126-amino-acid chain: Holo-[acyl-carrier-protein] synthase (126 aa).

Mg(2+) contacts are provided by Asp-9 and Glu-58.

Belongs to the P-Pant transferase superfamily. AcpS family. It depends on Mg(2+) as a cofactor.

The protein resides in the cytoplasm. The enzyme catalyses apo-[ACP] + CoA = holo-[ACP] + adenosine 3',5'-bisphosphate + H(+). Its function is as follows. Transfers the 4'-phosphopantetheine moiety from coenzyme A to a Ser of acyl-carrier-protein. The protein is Holo-[acyl-carrier-protein] synthase of Salmonella paratyphi B (strain ATCC BAA-1250 / SPB7).